We begin with the raw amino-acid sequence, 183 residues long: Translation initiation factor IF-3 (183 aa).

Positions 1–13 (MKQPDRNQQQGAK) are enriched in polar residues. Residues 1 to 24 (MKQPDRNQQQGAKSNRPAINDEIR) are disordered.

Belongs to the IF-3 family. In terms of assembly, monomer.

Its subcellular location is the cytoplasm. IF-3 binds to the 30S ribosomal subunit and shifts the equilibrium between 70S ribosomes and their 50S and 30S subunits in favor of the free subunits, thus enhancing the availability of 30S subunits on which protein synthesis initiation begins. This is Translation initiation factor IF-3 from Acinetobacter baylyi (strain ATCC 33305 / BD413 / ADP1).